The chain runs to 125 residues: Probable prefoldin subunit 6 (125 aa).

This sequence belongs to the prefoldin subunit beta family. As to quaternary structure, heterohexamer of two PFD-alpha type and four PFD-beta type subunits.

In terms of biological role, binds specifically to cytosolic chaperonin (c-CPN) and transfers target proteins to it. Binds to nascent polypeptide chain and promotes folding in an environment in which there are many competing pathways for nonnative proteins. In Drosophila melanogaster (Fruit fly), this protein is Probable prefoldin subunit 6.